The chain runs to 709 residues: Ribosomal RNA large subunit methyltransferase K/L (709 aa).

Positions 43 to 154 (LAYRITLWTR…NGVITIAMNF (112 aa)) constitute a THUMP domain.

It belongs to the methyltransferase superfamily. RlmKL family.

The protein resides in the cytoplasm. The enzyme catalyses guanosine(2445) in 23S rRNA + S-adenosyl-L-methionine = N(2)-methylguanosine(2445) in 23S rRNA + S-adenosyl-L-homocysteine + H(+). It catalyses the reaction guanosine(2069) in 23S rRNA + S-adenosyl-L-methionine = N(2)-methylguanosine(2069) in 23S rRNA + S-adenosyl-L-homocysteine + H(+). Specifically methylates the guanine in position 2445 (m2G2445) and the guanine in position 2069 (m7G2069) of 23S rRNA. In Shewanella baltica (strain OS195), this protein is Ribosomal RNA large subunit methyltransferase K/L.